Reading from the N-terminus, the 617-residue chain is uncharacterized protein (617 aa).

Residues 387-396 (NGGMSATQLP) show a composition bias toward polar residues. 2 disordered regions span residues 387–419 (NGGM…HAAP) and 443–599 (YDDF…NNEQ). Residues 404-414 (RQAAANQFQQR) show a composition bias toward low complexity. Residues 453-474 (QPLTQQQKDAARQRYQSASPEQ) are compositionally biased toward polar residues. 2 stretches are compositionally biased toward basic and acidic residues: residues 490–499 (QRREAARERI) and 522–531 (QRRDAARERI). Residues 549-570 (RPLNQQQRDNARQRVQSASPEQ) are compositionally biased toward polar residues. The span at 572 to 585 (QVFREKVQESRPQR) shows a compositional bias: basic and acidic residues. Residues 586-599 (LNDSNHTVRLNNEQ) are compositionally biased toward polar residues.

This is an uncharacterized protein from Escherichia coli (strain K12).